The primary structure comprises 191 residues: Elongation factor P (191 aa).

This sequence belongs to the elongation factor P family.

It localises to the cytoplasm. It functions in the pathway protein biosynthesis; polypeptide chain elongation. Its function is as follows. Involved in peptide bond synthesis. Stimulates efficient translation and peptide-bond synthesis on native or reconstituted 70S ribosomes in vitro. Probably functions indirectly by altering the affinity of the ribosome for aminoacyl-tRNA, thus increasing their reactivity as acceptors for peptidyl transferase. This Bartonella tribocorum (strain CIP 105476 / IBS 506) protein is Elongation factor P.